Consider the following 612-residue polypeptide: Dihydroxy-acid dehydratase (612 aa).

Residue D81 participates in Mg(2+) binding. Residue C122 participates in [2Fe-2S] cluster binding. Mg(2+) is bound by residues D123 and K124. K124 carries the post-translational modification N6-carboxylysine. A [2Fe-2S] cluster-binding site is contributed by C195. Position 491 (E491) interacts with Mg(2+). Catalysis depends on S517, which acts as the Proton acceptor.

It belongs to the IlvD/Edd family. Homodimer. Requires [2Fe-2S] cluster as cofactor. Mg(2+) serves as cofactor.

It carries out the reaction (2R)-2,3-dihydroxy-3-methylbutanoate = 3-methyl-2-oxobutanoate + H2O. It catalyses the reaction (2R,3R)-2,3-dihydroxy-3-methylpentanoate = (S)-3-methyl-2-oxopentanoate + H2O. It participates in amino-acid biosynthesis; L-isoleucine biosynthesis; L-isoleucine from 2-oxobutanoate: step 3/4. The protein operates within amino-acid biosynthesis; L-valine biosynthesis; L-valine from pyruvate: step 3/4. Functions in the biosynthesis of branched-chain amino acids. Catalyzes the dehydration of (2R,3R)-2,3-dihydroxy-3-methylpentanoate (2,3-dihydroxy-3-methylvalerate) into 2-oxo-3-methylpentanoate (2-oxo-3-methylvalerate) and of (2R)-2,3-dihydroxy-3-methylbutanoate (2,3-dihydroxyisovalerate) into 2-oxo-3-methylbutanoate (2-oxoisovalerate), the penultimate precursor to L-isoleucine and L-valine, respectively. The chain is Dihydroxy-acid dehydratase from Rhizobium leguminosarum bv. trifolii (strain WSM2304).